The chain runs to 430 residues: 5-methylthioadenosine/S-adenosylhomocysteine deaminase (430 aa).

The Zn(2+) site is built by histidine 63 and histidine 65. Substrate is bound by residues glutamate 92, arginine 144, and histidine 182. Histidine 209 contributes to the Zn(2+) binding site. Substrate is bound by residues glutamate 212 and aspartate 297. Residue aspartate 297 participates in Zn(2+) binding.

It belongs to the metallo-dependent hydrolases superfamily. MTA/SAH deaminase family. Zn(2+) serves as cofactor.

The catalysed reaction is S-adenosyl-L-homocysteine + H2O + H(+) = S-inosyl-L-homocysteine + NH4(+). The enzyme catalyses S-methyl-5'-thioadenosine + H2O + H(+) = S-methyl-5'-thioinosine + NH4(+). Functionally, catalyzes the deamination of 5-methylthioadenosine and S-adenosyl-L-homocysteine into 5-methylthioinosine and S-inosyl-L-homocysteine, respectively. Is also able to deaminate adenosine. This chain is 5-methylthioadenosine/S-adenosylhomocysteine deaminase, found in Desulforudis audaxviator (strain MP104C).